Consider the following 181-residue polypeptide: Inner membrane-spanning protein YciB (181 aa).

Helical transmembrane passes span 10–30 (LIIFFALYKFYDIYVATGALI), 50–70 (MQLITFVMVALFGGMTLALHD), 80–100 (IVYVVFALGLTISQIMGKPAI), 120–140 (WAWVMFFSGCAALNLYVAYHL), and 148–168 (FKVFGLLAATLVFTLLTGGYI).

Belongs to the YciB family.

It localises to the cell inner membrane. Plays a role in cell envelope biogenesis, maintenance of cell envelope integrity and membrane homeostasis. This chain is Inner membrane-spanning protein YciB, found in Vibrio cholerae serotype O1 (strain ATCC 39315 / El Tor Inaba N16961).